The chain runs to 869 residues: DNA mismatch repair protein MutS (869 aa).

Residue 619 to 626 (GPNMAGKS) coordinates ATP.

The protein belongs to the DNA mismatch repair MutS family.

This protein is involved in the repair of mismatches in DNA. It is possible that it carries out the mismatch recognition step. This protein has a weak ATPase activity. The chain is DNA mismatch repair protein MutS from Caldanaerobacter subterraneus subsp. tengcongensis (strain DSM 15242 / JCM 11007 / NBRC 100824 / MB4) (Thermoanaerobacter tengcongensis).